A 332-amino-acid polypeptide reads, in one-letter code: Transaldolase (332 aa).

The active-site Schiff-base intermediate with substrate is lysine 136.

The protein belongs to the transaldolase family. Type 1 subfamily.

It is found in the cytoplasm. The enzyme catalyses D-sedoheptulose 7-phosphate + D-glyceraldehyde 3-phosphate = D-erythrose 4-phosphate + beta-D-fructose 6-phosphate. The protein operates within carbohydrate degradation; pentose phosphate pathway; D-glyceraldehyde 3-phosphate and beta-D-fructose 6-phosphate from D-ribose 5-phosphate and D-xylulose 5-phosphate (non-oxidative stage): step 2/3. Transaldolase is important for the balance of metabolites in the pentose-phosphate pathway. The protein is Transaldolase of Nostoc sp. (strain PCC 7120 / SAG 25.82 / UTEX 2576).